We begin with the raw amino-acid sequence, 404 residues long: Putative CBL-interacting protein kinase 27 (404 aa).

Residues 11–266 form the Protein kinase domain; sequence YEMGRVLGHG…VAGLLETPWF (256 aa). Residues 17-25 and Lys40 contribute to the ATP site; that span reads LGHGNFGRV. Catalysis depends on Asp134, which acts as the Proton acceptor. Positions 152 to 181 are activation loop; the sequence is DFGLSALACHARPDGLLHTACGTPAYVAPE. The 28-residue stretch at 294 to 321 folds into the NAF domain; sequence DKDEPPEVLNAFHLISLSEGFDLSPLFE. Positions 335 to 356 are PPI; that stretch reads AGGTRFATREAASGVVARLEAL.

Belongs to the protein kinase superfamily. CAMK Ser/Thr protein kinase family. SNF1 subfamily. Requires Mn(2+) as cofactor.

The catalysed reaction is L-seryl-[protein] + ATP = O-phospho-L-seryl-[protein] + ADP + H(+). The enzyme catalyses L-threonyl-[protein] + ATP = O-phospho-L-threonyl-[protein] + ADP + H(+). Functionally, CIPK serine-threonine protein kinases interact with CBL proteins. Binding of a CBL protein to the regulatory NAF domain of CIPK protein lead to the activation of the kinase in a calcium-dependent manner. This Oryza sativa subsp. japonica (Rice) protein is Putative CBL-interacting protein kinase 27 (CIPK27).